A 192-amino-acid polypeptide reads, in one-letter code: Erythropoietin (192 aa).

Residues 1–26 (MGVPERPTLLLLLSLLLIPLGLPVLC) form the signal peptide. A disulfide bridge connects residues Cys-33 and Cys-187. Residues Asn-50, Asn-64, and Asn-109 are each glycosylated (N-linked (GlcNAc...) asparagine).

It belongs to the EPO/TPO family. Produced by kidney or liver of adult mammals and by liver of fetal or neonatal mammals.

Its subcellular location is the secreted. In terms of biological role, hormone involved in the regulation of erythrocyte proliferation and differentiation and the maintenance of a physiological level of circulating erythrocyte mass. Binds to EPOR leading to EPOR dimerization and JAK2 activation thereby activating specific downstream effectors, including STAT1 and STAT3. The chain is Erythropoietin (Epo) from Mus musculus (Mouse).